A 307-amino-acid chain; its full sequence is Hepatitis A virus cellular receptor 1 homolog (307 aa).

Positions 1 to 21 are cleaved as a signal peptide; it reads MVQLQVFISGLLLLLPGSVDS. Residues 22 to 124 form the Ig-like V-type domain; it reads YEVVKGVVGH…WFNDQKMTFS (103 aa). Over 22-235 the chain is Extracellular; it reads YEVVKGVVGH…RKPQRNPTKG (214 aa). Cystine bridges form between C37–C108, C49–C60, and C55–C107. The segment at 129 to 177 is disordered; sequence PEIPTSPPTRPTTTRPTTTRPTTISTRSTHVPTSTRVSTSTPTPEQTQT. Residues 139–175 are compositionally biased toward low complexity; sequence PTTTRPTTTRPTTISTRSTHVPTSTRVSTSTPTPEQT. The N-linked (GlcNAc...) asparagine glycan is linked to N206. Residues 236-256 traverse the membrane as a helical segment; the sequence is FYVGMSVAALLLLLLASTVVV. The Cytoplasmic segment spans residues 257-307; it reads TRYIIIRKKMGSLSFVAFHVSKSRALQNAAIVHPRAEDNIYIIEDRSRGAE.

Belongs to the immunoglobulin superfamily. TIM family. As to quaternary structure, interacts with STAM. Interacts with SELPLG. As to expression, expressed at a low level in normal kidney but are increased dramatically in postischemic kidney. Expressed in proliferating bromodeoxyuridine-positive and dedifferentiated vimentin-positive epithelial cells in regenerating proximal tubules.

The protein resides in the cell membrane. Functionally, phosphatidylserine receptor that plays an important functional role in regulatory B-cells homeostasis including generation, expansion and suppressor functions. As P-selectin/SELPLG ligand, plays a specialized role in activated but not naive T-cell trafficking during inflammatory responses. Controls thereby T-cell accumulation in the inflamed central nervous system (CNS) and the induction of autoimmune disease. Also regulates expression of various anti-inflammatory cytokines and co-inhibitory ligands including IL10. Acts as a regulator of T-cell proliferation. May play a role in kidney injury and repair. This is Hepatitis A virus cellular receptor 1 homolog (Havcr1) from Rattus norvegicus (Rat).